The sequence spans 1371 residues: uncharacterized protein (1371 aa).

The tract at residues 1020-1048 is disordered; it reads WYLSSSKNTPEPRPDPEPTPEGHDNNLRP. The segment covering 1029–1046 has biased composition (basic and acidic residues); the sequence is PEPRPDPEPTPEGHDNNL. Positions 1083–1371 constitute an Autotransporter domain; it reads GEPKATSMWM…SAMLGVKYTF (289 aa).

It is found in the cell outer membrane. This is an uncharacterized protein from Escherichia coli (strain K12).